A 167-amino-acid polypeptide reads, in one-letter code: Xanthine-guanine phosphoribosyltransferase (167 aa).

Residues 47–48 (RG), Q79, and 102–110 (DDLVDSGKT) each bind 5-phospho-alpha-D-ribose 1-diphosphate. Q79 contributes to the GMP binding site. D103 provides a ligand contact to Mg(2+). Residues D106 and I149 each coordinate guanine. D106 and I149 together coordinate xanthine. GMP is bound by residues 106 to 110 (DSGKT) and 148 to 149 (WI).

Belongs to the purine/pyrimidine phosphoribosyltransferase family. XGPT subfamily. As to quaternary structure, homotetramer. The cofactor is Mg(2+).

Its subcellular location is the cell inner membrane. It catalyses the reaction GMP + diphosphate = guanine + 5-phospho-alpha-D-ribose 1-diphosphate. The enzyme catalyses XMP + diphosphate = xanthine + 5-phospho-alpha-D-ribose 1-diphosphate. The catalysed reaction is IMP + diphosphate = hypoxanthine + 5-phospho-alpha-D-ribose 1-diphosphate. It participates in purine metabolism; GMP biosynthesis via salvage pathway; GMP from guanine: step 1/1. The protein operates within purine metabolism; XMP biosynthesis via salvage pathway; XMP from xanthine: step 1/1. Its function is as follows. Purine salvage pathway enzyme that catalyzes the transfer of the ribosyl-5-phosphate group from 5-phospho-alpha-D-ribose 1-diphosphate (PRPP) to the N9 position of the 6-oxopurines guanine and xanthine to form the corresponding ribonucleotides GMP (guanosine 5'-monophosphate) and XMP (xanthosine 5'-monophosphate), with the release of PPi. To a lesser extent, also acts on hypoxanthine. The protein is Xanthine-guanine phosphoribosyltransferase of Cereibacter sphaeroides (strain ATCC 17025 / ATH 2.4.3) (Rhodobacter sphaeroides).